The chain runs to 184 residues: uncharacterized protein (184 aa).

A helical transmembrane segment spans residues 5 to 27; the sequence is YLLATAMFLIVCVYVISETVNLH.

Its subcellular location is the membrane. This is an uncharacterized protein from Methanocaldococcus jannaschii (strain ATCC 43067 / DSM 2661 / JAL-1 / JCM 10045 / NBRC 100440) (Methanococcus jannaschii).